A 257-amino-acid chain; its full sequence is Aquaporin TIP4-2 (257 aa).

Transmembrane regions (helical) follow at residues 32 to 52 (LVLT…AGAG) and 63 to 83 (TLAA…TAGF). Residues 91–93 (NPA) carry the NPA 1 motif. The next 3 helical transmembrane spans lie at 107–127 (LRAL…CILL), 150–170 (GLVM…AMIL), and 178–198 (TIGP…GGNF). Positions 204–206 (NPA) match the NPA 2 motif. The helical transmembrane segment at 225-245 (WIGPLLGGSLAGFVYESLFMV) threads the bilayer.

The protein belongs to the MIP/aquaporin (TC 1.A.8) family. TIP (TC 1.A.8.10) subfamily.

It is found in the vacuole membrane. Functionally, aquaporins facilitate the transport of water and small neutral solutes across cell membranes. In Zea mays (Maize), this protein is Aquaporin TIP4-2 (TIP4-2).